A 447-amino-acid chain; its full sequence is MKLFGTSGIRMKNLDPLIAYKVGFAISKNFKKAVIGRDTRTTGNLIESAITAGLLNGGCDVTTIGMVPTPVLGYSARDYDLGIMITASHNPPEYNGIKLFNKNGTAFDPKQEEKLEKIIANDDFNEGTWDNIGCASEDKTAVKKYSEYILQNVDIKTNFNVVVDCANAAGCVVSPNIFTEAGCKVISVNSHCDGRFVGRMPEPNETNLKETVDIIKGLNSNGRNYIGIAHDGDADRMIAIDELGRVTDFDKLLAAFCKYVVQKTGADKIVTTVDASMAIDEYLDEFGAKVIRTKIGDVAVAEELEKTGAIFGGEPSGTWIHRDIHLTPDGILSGLRVLEMMEFYGKKLCDIIDEVPSYYNMREKIACPDNLKQKVMDYISKEGKKIFEKEPETLDGVRFSFEKGWMLIRPSGTESYVRVRVEAKDEDFAEKLMENGISMVKTGISEN.

Catalysis depends on Ser88, which acts as the Phosphoserine intermediate. Mg(2+) contacts are provided by Ser88, Asp231, Asp233, and Asp235. Residue Ser88 is modified to Phosphoserine.

The protein belongs to the phosphohexose mutase family. Mg(2+) serves as cofactor. Activated by phosphorylation.

It carries out the reaction alpha-D-glucosamine 1-phosphate = D-glucosamine 6-phosphate. Catalyzes the conversion of glucosamine-6-phosphate to glucosamine-1-phosphate. This chain is Phosphoglucosamine mutase, found in Methanococcus maripaludis (strain C7 / ATCC BAA-1331).